Here is a 161-residue protein sequence, read N- to C-terminus: 2-C-methyl-D-erythritol 2,4-cyclodiphosphate synthase (161 aa).

A divalent metal cation contacts are provided by aspartate 8 and histidine 10. 4-CDP-2-C-methyl-D-erythritol 2-phosphate is bound by residues 8-10 (DLH) and 34-35 (HS). Histidine 42 serves as a coordination point for a divalent metal cation. Residues 56 to 58 (DIG), 100 to 106 (AEYPKML), and arginine 142 each bind 4-CDP-2-C-methyl-D-erythritol 2-phosphate.

It belongs to the IspF family. Homotrimer. A divalent metal cation serves as cofactor.

It catalyses the reaction 4-CDP-2-C-methyl-D-erythritol 2-phosphate = 2-C-methyl-D-erythritol 2,4-cyclic diphosphate + CMP. The protein operates within isoprenoid biosynthesis; isopentenyl diphosphate biosynthesis via DXP pathway; isopentenyl diphosphate from 1-deoxy-D-xylulose 5-phosphate: step 4/6. Its function is as follows. Involved in the biosynthesis of isopentenyl diphosphate (IPP) and dimethylallyl diphosphate (DMAPP), two major building blocks of isoprenoid compounds. Catalyzes the conversion of 4-diphosphocytidyl-2-C-methyl-D-erythritol 2-phosphate (CDP-ME2P) to 2-C-methyl-D-erythritol 2,4-cyclodiphosphate (ME-CPP) with a corresponding release of cytidine 5-monophosphate (CMP). The chain is 2-C-methyl-D-erythritol 2,4-cyclodiphosphate synthase from Buchnera aphidicola subsp. Acyrthosiphon pisum (strain 5A).